The sequence spans 140 residues: uncharacterized protein (140 aa).

This is an uncharacterized protein from Acholeplasma phage L2 (Bacteriophage L2).